We begin with the raw amino-acid sequence, 199 residues long: Recombination protein RecR (199 aa).

A C4-type zinc finger spans residues 58 to 73 (CSVCFTLSDTPVCAIC). One can recognise a Toprim domain in the interval 81-176 (SLLCVVEGPT…TVTRIASGMP (96 aa)).

It belongs to the RecR family.

Functionally, may play a role in DNA repair. It seems to be involved in an RecBC-independent recombinational process of DNA repair. It may act with RecF and RecO. The protein is Recombination protein RecR of Desulfosudis oleivorans (strain DSM 6200 / JCM 39069 / Hxd3) (Desulfococcus oleovorans).